We begin with the raw amino-acid sequence, 95 residues long: DNA-directed RNA polymerase subunit Rpo6 (95 aa).

The protein belongs to the archaeal Rpo6/eukaryotic RPB6 RNA polymerase subunit family. Part of the RNA polymerase complex.

It localises to the cytoplasm. It carries out the reaction RNA(n) + a ribonucleoside 5'-triphosphate = RNA(n+1) + diphosphate. Functionally, DNA-dependent RNA polymerase (RNAP) catalyzes the transcription of DNA into RNA using the four ribonucleoside triphosphates as substrates. The polypeptide is DNA-directed RNA polymerase subunit Rpo6 (Saccharolobus islandicus (strain M.16.27) (Sulfolobus islandicus)).